A 224-amino-acid polypeptide reads, in one-letter code: UPF0173 metal-dependent hydrolase TTHA1283 (224 aa).

The protein belongs to the UPF0173 family.

The sequence is that of UPF0173 metal-dependent hydrolase TTHA1283 from Thermus thermophilus (strain ATCC 27634 / DSM 579 / HB8).